A 255-amino-acid polypeptide reads, in one-letter code: Small ribosomal subunit protein eS1 (255 aa).

Residues 1–18 (MAVGKNKRLSKGKKGLKK) show a composition bias toward basic residues. The segment at 1–28 (MAVGKNKRLSKGKKGLKKRTQDPFSRKD) is disordered. Alanine 2 bears the N-acetylalanine; partial mark. Over residues 19–28 (RTQDPFSRKD) the composition is skewed to basic and acidic residues.

Belongs to the eukaryotic ribosomal protein eS1 family. As to quaternary structure, component of the small ribosomal subunit. Mature ribosomes consist of a small (40S) and a large (60S) subunit. The 40S subunit contains about 33 different proteins and 1 molecule of RNA (18S). The 60S subunit contains about 49 different proteins and 3 molecules of RNA (25S, 5.8S and 5S).

Its subcellular location is the cytoplasm. The polypeptide is Small ribosomal subunit protein eS1 (Ajellomyces dermatitidis (strain ER-3 / ATCC MYA-2586) (Blastomyces dermatitidis)).